The primary structure comprises 228 residues: Movement and silencing protein TGBp1 (228 aa).

In terms of domain architecture, (+)RNA virus helicase ATP-binding spans 1–132 (MDVLLSLLSE…KCTAQLLNDL (132 aa)). The (+)RNA virus helicase C-terminal domain occupies 133 to 228 (SYEVESDLAD…LSPNATYTAS (96 aa)).

Belongs to the Tymovirales TGBp1 protein family. In terms of assembly, homodimer and homooligomer. Interacts with capsid protein. Interacts with host AGO1; this interaction targets the host protein for degradation, thereby suppressing the antiviral RNA silencing.

The protein localises to the host cytoplasm. Functionally, transports viral genome to neighboring plant cells directly through plasmosdesmata, without any budding. The movement protein allows efficient cell to cell propagation, by bypassing the host cell wall barrier. Increases plasmodesma size exclusion limit. Acts as a suppressor of RNA-mediated gene silencing, also known as post-transcriptional gene silencing (PTGS), a mechanism of plant viral defense that limits the accumulation of viral RNAs. In Lilium (LSV), this protein is Movement and silencing protein TGBp1.